Here is a 421-residue protein sequence, read N- to C-terminus: Structure-specific endonuclease subunit SLX1 (421 aa).

Residues 13–95 (AFYCCYLLRS…QHTKESRHAE (83 aa)) enclose the GIY-YIG domain. 2 disordered regions span residues 34–57 (TPEPSRRLAQHNGDRTGGARKTSS) and 96–120 (VERCESEQLGTRGSSRTGKEVKRAG). The SLX1-type zinc finger occupies 225–280 (CGVCKQRLNPRNDMIAICSHSLCRCASHLLCLSAHFLEAAGFIGKLIPKEGTCPAC). Residues 310–322 (RRRTEQVGKRKIS) are compositionally biased toward basic residues. A disordered region spans residues 310–339 (RRRTEQVGKRKISNHVSSEKGESEASMPST).

It belongs to the SLX1 family. In terms of assembly, forms a heterodimer with SLX4. The cofactor is a divalent metal cation.

The protein resides in the nucleus. In terms of biological role, catalytic subunit of the SLX1-SLX4 structure-specific endonuclease that resolves DNA secondary structures generated during DNA repair and recombination. Has endonuclease activity towards branched DNA substrates, introducing single-strand cuts in duplex DNA close to junctions with ss-DNA. The chain is Structure-specific endonuclease subunit SLX1 from Ajellomyces capsulatus (strain G186AR / H82 / ATCC MYA-2454 / RMSCC 2432) (Darling's disease fungus).